A 250-amino-acid polypeptide reads, in one-letter code: 3-deoxy-manno-octulosonate cytidylyltransferase (250 aa).

It belongs to the KdsB family.

The protein resides in the cytoplasm. It catalyses the reaction 3-deoxy-alpha-D-manno-oct-2-ulosonate + CTP = CMP-3-deoxy-beta-D-manno-octulosonate + diphosphate. Its pathway is nucleotide-sugar biosynthesis; CMP-3-deoxy-D-manno-octulosonate biosynthesis; CMP-3-deoxy-D-manno-octulosonate from 3-deoxy-D-manno-octulosonate and CTP: step 1/1. It functions in the pathway bacterial outer membrane biogenesis; lipopolysaccharide biosynthesis. Activates KDO (a required 8-carbon sugar) for incorporation into bacterial lipopolysaccharide in Gram-negative bacteria. The chain is 3-deoxy-manno-octulosonate cytidylyltransferase from Cytophaga hutchinsonii (strain ATCC 33406 / DSM 1761 / CIP 103989 / NBRC 15051 / NCIMB 9469 / D465).